A 1000-amino-acid chain; its full sequence is C2 domain-containing protein 5 (1000 aa).

The 109-residue stretch at 1–109 folds into the C2 domain; that stretch reads MPGKLKVKIV…EAATVISGWF (109 aa). The Ca(2+) site is built by aspartate 19, aspartate 26, aspartate 76, aspartate 78, serine 81, and aspartate 84. A Phosphoserine; by PKB/AKT2 modification is found at serine 197. Serine 200 and serine 260 each carry phosphoserine. A disordered region spans residues 265 to 330; it reads MKEIPFNEDP…SGSAGKEGGP (66 aa). Over residues 274 to 289 the composition is skewed to polar residues; it reads PNPNTHSSGPSTPLKN. A compositionally biased stretch (low complexity) spans 290–318; the sequence is QTYSFSPSKSYSRQSSSSDTDLSLTPKTG. Phosphoserine is present on residues serine 293, serine 295, serine 304, serine 305, and serine 306. Position 317 is a phosphothreonine (threonine 317). The segment covering 319–328 has biased composition (gly residues); the sequence is MGSGSAGKEG. Serine 323 is subject to Phosphoserine. At threonine 601 the chain carries Phosphothreonine. The interval 639 to 669 is disordered; that stretch reads EIIGSPIPEPRQRSRLLRSQSESSDEVTELD. Serine 643, serine 657, serine 659, serine 661, and serine 662 each carry phosphoserine. Threonine 666 carries the post-translational modification Phosphothreonine. A Phosphoserine modification is found at serine 671. Threonine 807 carries the post-translational modification Phosphothreonine. 2 positions are modified to phosphoserine: serine 817 and serine 852.

Ca(2+) serves as cofactor. Post-translationally, phosphorylated on Ser-197 by active myristoylated kinase AKT2; insulin-stimulated phosphorylation by AKT2 regulates SLC2A4/GLUT4 translocation into the plasma membrane.

It localises to the cytoplasmic vesicle membrane. It is found in the cytoplasm. Its subcellular location is the cell cortex. The protein resides in the cell membrane. The protein localises to the cell projection. It localises to the ruffle. Required for insulin-stimulated glucose transport and glucose transporter SLC2A4/GLUT4 translocation from intracellular glucose storage vesicle (GSV) to the plasma membrane (PM) in adipocytes. Binds phospholipid membranes in a calcium-dependent manner and is necessary for the optimal membrane fusion between SLC2A4/GLUT4 GSV and the PM. The chain is C2 domain-containing protein 5 (C2CD5) from Pongo abelii (Sumatran orangutan).